The following is a 25-amino-acid chain: Dermaseptin-5.2TR (25 aa).

Position 25 is a valine amide (V25).

As to expression, expressed by the skin glands.

Its subcellular location is the secreted. In terms of biological role, has antimicrobial activity. The polypeptide is Dermaseptin-5.2TR (Phyllomedusa trinitatis (Trinidad leaf frog)).